The chain runs to 456 residues: Trigger factor (456 aa).

Positions 192–277 (GDTVVIDFVG…IHEVKTKEVP (86 aa)) constitute a PPIase FKBP-type domain.

Belongs to the FKBP-type PPIase family. Tig subfamily.

It is found in the cytoplasm. It carries out the reaction [protein]-peptidylproline (omega=180) = [protein]-peptidylproline (omega=0). Involved in protein export. Acts as a chaperone by maintaining the newly synthesized protein in an open conformation. Functions as a peptidyl-prolyl cis-trans isomerase. In Streptococcus pyogenes serotype M2 (strain MGAS10270), this protein is Trigger factor.